We begin with the raw amino-acid sequence, 583 residues long: Isocitrate dehydrogenase kinase/phosphatase (583 aa).

ATP-binding positions include 315–321 (APGIRGM) and lysine 336. Aspartate 371 is a catalytic residue.

It belongs to the AceK family.

The protein localises to the cytoplasm. It carries out the reaction L-seryl-[isocitrate dehydrogenase] + ATP = O-phospho-L-seryl-[isocitrate dehydrogenase] + ADP + H(+). Bifunctional enzyme which can phosphorylate or dephosphorylate isocitrate dehydrogenase (IDH) on a specific serine residue. This is a regulatory mechanism which enables bacteria to bypass the Krebs cycle via the glyoxylate shunt in response to the source of carbon. When bacteria are grown on glucose, IDH is fully active and unphosphorylated, but when grown on acetate or ethanol, the activity of IDH declines drastically concomitant with its phosphorylation. The polypeptide is Isocitrate dehydrogenase kinase/phosphatase (Salmonella agona (strain SL483)).